The chain runs to 174 residues: Co-chaperone protein HscB homolog (174 aa).

A J domain is found at 2 to 74; that stretch reads NYFELFKFSP…IRRAEHMLSL (73 aa).

Belongs to the HscB family. Interacts with HscA and stimulates its ATPase activity.

Functionally, co-chaperone involved in the maturation of iron-sulfur cluster-containing proteins. Seems to help targeting proteins to be folded toward HscA. This is Co-chaperone protein HscB homolog from Shewanella sp. (strain ANA-3).